The chain runs to 318 residues: NADH-ubiquinone oxidoreductase chain 1 (318 aa).

8 helical membrane-spanning segments follow: residues 2-22, 70-90, 100-120, 136-156, 172-192, 222-242, 253-273, and 294-314; these read FMIN…FLTL, MFII…SPLP, LGVL…LWSG, VAQT…VLLM, LWLL…TLAE, LFFL…AILF, ELYT…FLWI, and LPLT…TASI.

This sequence belongs to the complex I subunit 1 family. As to quaternary structure, core subunit of respiratory chain NADH dehydrogenase (Complex I) which is composed of 45 different subunits.

The protein resides in the mitochondrion inner membrane. It carries out the reaction a ubiquinone + NADH + 5 H(+)(in) = a ubiquinol + NAD(+) + 4 H(+)(out). Functionally, core subunit of the mitochondrial membrane respiratory chain NADH dehydrogenase (Complex I) which catalyzes electron transfer from NADH through the respiratory chain, using ubiquinone as an electron acceptor. Essential for the catalytic activity and assembly of complex I. In Balaenoptera physalus (Fin whale), this protein is NADH-ubiquinone oxidoreductase chain 1 (MT-ND1).